We begin with the raw amino-acid sequence, 197 residues long: Probable GTP-binding protein EngB (197 aa).

Residues 26–197 enclose the EngB-type G domain; sequence ELPEIALAGR…EAWDAILEKL (172 aa). Residues 34-41, 61-65, 79-82, 146-149, and 178-180 contribute to the GTP site; these read GRSNVGKS, GKTQL, DVPG, TKAD, and FSS. Residues Ser-41 and Thr-63 each contribute to the Mg(2+) site.

Belongs to the TRAFAC class TrmE-Era-EngA-EngB-Septin-like GTPase superfamily. EngB GTPase family. Mg(2+) is required as a cofactor.

Its function is as follows. Necessary for normal cell division and for the maintenance of normal septation. In Streptococcus pneumoniae (strain CGSP14), this protein is Probable GTP-binding protein EngB.